Reading from the N-terminus, the 424-residue chain is Trigger factor (424 aa).

In terms of domain architecture, PPIase FKBP-type spans 163–248; the sequence is GDTVVLDFEG…IHEIKAKELP (86 aa).

The protein belongs to the FKBP-type PPIase family. Tig subfamily.

Its subcellular location is the cytoplasm. The catalysed reaction is [protein]-peptidylproline (omega=180) = [protein]-peptidylproline (omega=0). Functionally, involved in protein export. Acts as a chaperone by maintaining the newly synthesized protein in an open conformation. Functions as a peptidyl-prolyl cis-trans isomerase. The protein is Trigger factor of Bacillus pumilus (strain SAFR-032).